A 213-amino-acid chain; its full sequence is Orotate phosphoribosyltransferase (213 aa).

Lys26 is a binding site for 5-phospho-alpha-D-ribose 1-diphosphate. 34–35 is an orotate binding site; that stretch reads FF. 5-phospho-alpha-D-ribose 1-diphosphate contacts are provided by residues 72-73, Arg99, Lys100, Lys103, His105, and 124-132; these read YK and DDVITAGTA. The orotate site is built by Thr128 and Arg156.

The protein belongs to the purine/pyrimidine phosphoribosyltransferase family. PyrE subfamily. Homodimer. The cofactor is Mg(2+).

The enzyme catalyses orotidine 5'-phosphate + diphosphate = orotate + 5-phospho-alpha-D-ribose 1-diphosphate. The protein operates within pyrimidine metabolism; UMP biosynthesis via de novo pathway; UMP from orotate: step 1/2. Functionally, catalyzes the transfer of a ribosyl phosphate group from 5-phosphoribose 1-diphosphate to orotate, leading to the formation of orotidine monophosphate (OMP). The protein is Orotate phosphoribosyltransferase of Photobacterium profundum (strain SS9).